The sequence spans 513 residues: Sphingosine-1-phosphate transporter SPNS2 (513 aa).

11 helical membrane passes run 102-122 (GLLQ…FGYL), 130-150 (VILS…SFIP), 163-183 (LVGI…GDLF), 190-210 (LMLS…YITG), 222-242 (WALR…LIFV), 276-296 (LATS…PLYL), 320-340 (LIFG…GAGA), 354-374 (LVCA…FVAA), 378-398 (IIAA…NWAI), 422-442 (TSHL…SDLI), and 463-483 (LCPF…LFFL).

It belongs to the major facilitator superfamily. Spinster (TC 2.A.1.49) family.

It is found in the cell membrane. The protein resides in the endosome membrane. The enzyme catalyses sphing-4-enine 1-phosphate(in) = sphing-4-enine 1-phosphate(out). The catalysed reaction is sphinganine 1-phosphate(in) = sphinganine 1-phosphate(out). Lipid transporter that specifically mediates export of sphingosine-1-phosphate (sphing-4-enine 1-phosphate, S1P) and sphinganine-1-phosphate. The chain is Sphingosine-1-phosphate transporter SPNS2 (spns2) from Xenopus tropicalis (Western clawed frog).